Consider the following 556-residue polypeptide: Urocanate hydratase (556 aa).

Residues 52 to 53 (GG), Gln-130, 176 to 178 (GMG), Glu-196, Arg-201, 243 to 244 (NA), 264 to 268 (QTSAH), 274 to 275 (YL), and Tyr-323 each bind NAD(+). The active site involves Cys-411. Gly-493 provides a ligand contact to NAD(+).

It belongs to the urocanase family. Requires NAD(+) as cofactor.

It localises to the cytoplasm. The enzyme catalyses 4-imidazolone-5-propanoate = trans-urocanate + H2O. It participates in amino-acid degradation; L-histidine degradation into L-glutamate; N-formimidoyl-L-glutamate from L-histidine: step 2/3. Catalyzes the conversion of urocanate to 4-imidazolone-5-propionate. In Rhodospirillum rubrum (strain ATCC 11170 / ATH 1.1.1 / DSM 467 / LMG 4362 / NCIMB 8255 / S1), this protein is Urocanate hydratase.